Consider the following 487-residue polypeptide: DNA ligase (487 aa).

Lys-159 acts as the N6-AMP-lysine intermediate in catalysis. Positions 164, 182, and 217 each coordinate ATP. Glu-217 contacts a divalent metal cation. The tract at residues 229-237 (EGLDFLFDA) is interaction with the sliding clamp. Glu-344 provides a ligand contact to a divalent metal cation. ATP is bound by residues Arg-359 and Lys-365.

Belongs to the ATP-dependent DNA ligase family. In terms of assembly, interacts with the sliding clamp. The cofactor is a divalent metal cation.

The catalysed reaction is ATP + (deoxyribonucleotide)n-3'-hydroxyl + 5'-phospho-(deoxyribonucleotide)m = (deoxyribonucleotide)n+m + AMP + diphosphate.. In terms of biological role, DNA ligase, which is expressed in the early stage of lytic development, has been implicated in T4 DNA synthesis and genetic recombination. It may also play a role in T4 DNA repair. The protein is DNA ligase (30) of Enterobacteria phage T4 (Bacteriophage T4).